The following is a 315-amino-acid chain: Probable cell division protein kinase ECU11_1290 (315 aa).

The 282-residue stretch at 13–294 (YEKVCRISSG…ASQGLCSGFV (282 aa)) folds into the Protein kinase domain. ATP is bound by residues 19–27 (ISSGSFGNV) and K42. The Proton acceptor role is filled by D138.

The protein belongs to the protein kinase superfamily. CMGC Ser/Thr protein kinase family. CDC2/CDKX subfamily.

Its subcellular location is the nucleus. It carries out the reaction L-seryl-[protein] + ATP = O-phospho-L-seryl-[protein] + ADP + H(+). It catalyses the reaction L-threonyl-[protein] + ATP = O-phospho-L-threonyl-[protein] + ADP + H(+). May play a role in the control of the eukaryotic cell cycle. In Encephalitozoon cuniculi (strain GB-M1) (Microsporidian parasite), this protein is Probable cell division protein kinase ECU11_1290.